The chain runs to 83 residues: Short neurotoxin 3FTx-Oxy4 (83 aa).

An N-terminal signal peptide occupies residues Met-1 to Thr-21. Disulfide bonds link Cys-24–Cys-45, Cys-38–Cys-62, Cys-64–Cys-75, and Cys-76–Cys-81.

It belongs to the three-finger toxin family. Short-chain subfamily. Type I alpha-neurotoxin sub-subfamily. As to expression, expressed by the venom gland.

The protein localises to the secreted. In terms of biological role, binds to muscle nicotinic acetylcholine receptor (nAChR) and inhibit acetylcholine from binding to the receptor, thereby impairing neuromuscular transmission. This Oxyuranus microlepidotus (Inland taipan) protein is Short neurotoxin 3FTx-Oxy4.